The chain runs to 1107 residues: Rho GTPase-activating protein 39 (1107 aa).

A disordered region spans residues 1 to 21 (MSQAQDYECRSHHVDEQEPRI). Ser-2 is subject to N-acetylserine. The span at 7–19 (YECRSHHVDEQEP) shows a compositional bias: basic and acidic residues. WW domains lie at 25–58 (STRLEWVEIIEPRTRERMYANLVTGECVWDPPAG) and 63–97 (RTSEDQWWELFDPNTSRFYYYSAASQRTVWHRPQN). Residues 111–122 (QNTESPRASADN) show a composition bias toward polar residues. Disordered stretches follow at residues 111-173 (QNTE…PPGV), 218-267 (PSFL…PERR), 282-311 (SPLLIQPRKPSSDSQPSSPRYGYEPPLYEE), and 326-370 (MDVQ…LMRT). Low complexity predominate over residues 123 to 136 (SPGRGSRDGSTGSS). Positions 242–254 (SGSQHSPNLQTFV) are enriched in polar residues. Position 282 is a phosphoserine (Ser-282). Composition is skewed to polar residues over residues 331–343 (EANSPYQTGSPQR) and 353–369 (LQTTKQTPTSPCQQLMR). Phosphoserine occurs at positions 380, 384, 402, and 403. Disordered regions lie at residues 404–429 (PKLRAGPRHKYAPNPGGGTYSLQPSP), 441–529 (SGDY…RASL), and 563–585 (MKQRGSWDSQQDGSGYESDGAVP). Residues 470–484 (SWSSQQDTMSSTGYS) show a composition bias toward polar residues. A phosphoserine mark is found at Ser-597, Ser-683, Ser-708, and Ser-719. Residues 715-867 (WSSESIKKPM…PYVEEPDGVA (153 aa)) form the MyTH4 domain. Residues 914-1102 (SALQEVMSMQ…VLIQHLDTSF (189 aa)) form the Rho-GAP domain.

Its subcellular location is the nucleus. This chain is Rho GTPase-activating protein 39 (Arhgap39), found in Mus musculus (Mouse).